A 1459-amino-acid polypeptide reads, in one-letter code: Endogenous retrovirus group K member 7 Pol protein (1459 aa).

In terms of domain architecture, Reverse transcriptase spans 57–245 (LEKGHIEPSF…TPFHYLGMQI (189 aa)). The LPQG signature appears at 161-164 (LPQG). The YXDD signature appears at 195–198 (YIDD). Residues 460 to 590 (LENALTVFTD…ADLLVSSALI (131 aa)) enclose the RNase H type-1 domain. Mg(2+)-binding residues include Asp469, Glu497, Asp517, and Asp582. Residues 587 to 628 (SALIKAQELHALTHVNAAGLKNKFDVTWKQAKDIVQHCTQCQ) form an Integrase-type zinc finger. Zn(2+) contacts are provided by His596, His600, Cys624, and Cys627. The 162-residue stretch at 642-803 (RGLCPNALWQ…TSAEQHLTGK (162 aa)) folds into the Integrase catalytic domain. A DNA-binding region (integrase-type) is located at residues 811-859 (KLIWWKDNKNKTWEIGKVITWGRGFACVSPGENQLPVWIPTRHLKFYNE).

Belongs to the beta type-B retroviral polymerase family. HERV class-II K(HML-2) pol subfamily.

The catalysed reaction is DNA(n) + a 2'-deoxyribonucleoside 5'-triphosphate = DNA(n+1) + diphosphate. It catalyses the reaction Endonucleolytic cleavage to 5'-phosphomonoester.. Its function is as follows. Early post-infection, the reverse transcriptase converts the viral RNA genome into double-stranded viral DNA. The RNase H domain of the reverse transcriptase performs two functions. It degrades the RNA template and specifically removes the RNA primer from the RNA/DNA hybrid. Following nuclear import, the integrase catalyzes the insertion of the linear, double-stranded viral DNA into the host cell chromosome. Endogenous Pol proteins may have kept, lost or modified their original function during evolution. This Homo sapiens (Human) protein is Endogenous retrovirus group K member 7 Pol protein (ERVK-7).